The sequence spans 455 residues: Bifunctional protein GlmU (455 aa).

A pyrophosphorylase region spans residues 1–226 (MSLDIVILAA…AMEVQGANDR (226 aa)). UDP-N-acetyl-alpha-D-glucosamine is bound by residues 8 to 11 (LAAG), Lys-22, Gln-73, 78 to 79 (GT), 99 to 101 (YGD), Gly-136, Glu-151, Asn-166, and Asn-224. Residue Asp-101 participates in Mg(2+) binding. Asn-224 lines the Mg(2+) pocket. The segment at 227–247 (RQLSELERHYQLREGRRLMAQ) is linker. The interval 248-455 (GVTLRDPARF…WKRPEKIKKS (208 aa)) is N-acetyltransferase. Arg-330 and Lys-348 together coordinate UDP-N-acetyl-alpha-D-glucosamine. The active-site Proton acceptor is the His-360. UDP-N-acetyl-alpha-D-glucosamine is bound by residues Tyr-363 and Asn-374. Acetyl-CoA contacts are provided by residues Ala-377, 383–384 (NY), Ser-402, Ala-420, and Arg-437.

The protein in the N-terminal section; belongs to the N-acetylglucosamine-1-phosphate uridyltransferase family. It in the C-terminal section; belongs to the transferase hexapeptide repeat family. In terms of assembly, homotrimer. Mg(2+) serves as cofactor.

Its subcellular location is the cytoplasm. It catalyses the reaction alpha-D-glucosamine 1-phosphate + acetyl-CoA = N-acetyl-alpha-D-glucosamine 1-phosphate + CoA + H(+). The enzyme catalyses N-acetyl-alpha-D-glucosamine 1-phosphate + UTP + H(+) = UDP-N-acetyl-alpha-D-glucosamine + diphosphate. It participates in nucleotide-sugar biosynthesis; UDP-N-acetyl-alpha-D-glucosamine biosynthesis; N-acetyl-alpha-D-glucosamine 1-phosphate from alpha-D-glucosamine 6-phosphate (route II): step 2/2. It functions in the pathway nucleotide-sugar biosynthesis; UDP-N-acetyl-alpha-D-glucosamine biosynthesis; UDP-N-acetyl-alpha-D-glucosamine from N-acetyl-alpha-D-glucosamine 1-phosphate: step 1/1. The protein operates within bacterial outer membrane biogenesis; LPS lipid A biosynthesis. Its function is as follows. Catalyzes the last two sequential reactions in the de novo biosynthetic pathway for UDP-N-acetylglucosamine (UDP-GlcNAc). The C-terminal domain catalyzes the transfer of acetyl group from acetyl coenzyme A to glucosamine-1-phosphate (GlcN-1-P) to produce N-acetylglucosamine-1-phosphate (GlcNAc-1-P), which is converted into UDP-GlcNAc by the transfer of uridine 5-monophosphate (from uridine 5-triphosphate), a reaction catalyzed by the N-terminal domain. This is Bifunctional protein GlmU from Pseudomonas putida (strain ATCC 700007 / DSM 6899 / JCM 31910 / BCRC 17059 / LMG 24140 / F1).